Consider the following 781-residue polypeptide: Probable aminopeptidase 2 (781 aa).

Substrate contacts are provided by residues E105 and 237–241 (GAMEN). H272 provides a ligand contact to Zn(2+). The active-site Proton acceptor is E273. Zn(2+) contacts are provided by H276 and E295.

Belongs to the peptidase M1 family. It depends on Zn(2+) as a cofactor.

The protein localises to the cytoplasm. The polypeptide is Probable aminopeptidase 2 (ape2) (Sulfurisphaera tokodaii (strain DSM 16993 / JCM 10545 / NBRC 100140 / 7) (Sulfolobus tokodaii)).